The chain runs to 155 residues: Transcription antitermination protein NusB (155 aa).

It belongs to the NusB family.

Involved in transcription antitermination. Required for transcription of ribosomal RNA (rRNA) genes. Binds specifically to the boxA antiterminator sequence of the ribosomal RNA (rrn) operons. The chain is Transcription antitermination protein NusB from Ralstonia nicotianae (strain ATCC BAA-1114 / GMI1000) (Ralstonia solanacearum).